The chain runs to 119 residues: MGNSFRSDRVAVEIQREINDILRNKVRDPRVQDVNITDVQLTGDLSQATVYYSLLSNLASDNEKAATALKKATGLFKSELAKRMTIFKIPDLTFAKDESVEYGSKIDELLRGLNDKSEY.

It belongs to the RbfA family. As to quaternary structure, monomer. Binds 30S ribosomal subunits, but not 50S ribosomal subunits or 70S ribosomes.

The protein localises to the cytoplasm. Its function is as follows. One of several proteins that assist in the late maturation steps of the functional core of the 30S ribosomal subunit. Associates with free 30S ribosomal subunits (but not with 30S subunits that are part of 70S ribosomes or polysomes). Required for efficient processing of 16S rRNA. May interact with the 5'-terminal helix region of 16S rRNA. The protein is Ribosome-binding factor A of Lactococcus lactis subsp. cremoris (strain SK11).